A 368-amino-acid chain; its full sequence is Branched-chain-amino-acid aminotransferase (368 aa).

R101 is a pyridoxal 5'-phosphate binding site. K204 is subject to N6-(pyridoxal phosphate)lysine. Residues Y209, 271 to 272 (IT), and T314 each bind pyridoxal 5'-phosphate.

This sequence belongs to the class-IV pyridoxal-phosphate-dependent aminotransferase family. Homodimer. Requires pyridoxal 5'-phosphate as cofactor.

It carries out the reaction L-leucine + 2-oxoglutarate = 4-methyl-2-oxopentanoate + L-glutamate. It catalyses the reaction L-isoleucine + 2-oxoglutarate = (S)-3-methyl-2-oxopentanoate + L-glutamate. The enzyme catalyses L-valine + 2-oxoglutarate = 3-methyl-2-oxobutanoate + L-glutamate. It participates in amino-acid biosynthesis; L-isoleucine biosynthesis; L-isoleucine from 2-oxobutanoate: step 4/4. The protein operates within amino-acid biosynthesis; L-leucine biosynthesis; L-leucine from 3-methyl-2-oxobutanoate: step 4/4. Its pathway is amino-acid biosynthesis; L-valine biosynthesis; L-valine from pyruvate: step 4/4. In terms of biological role, catalyzes the reversible transfers of an amino group from glutamate to the alpha-ketoacid of the respective amino acid in the final step in the biosynthesis of branchedchain amino acids. This is Branched-chain-amino-acid aminotransferase (ilvE) from Mycobacterium tuberculosis (strain CDC 1551 / Oshkosh).